Consider the following 321-residue polypeptide: 2-oxoglutarate-dependent dioxygenase frbH (321 aa).

The disordered stretch occupies residues 77–97 (SRNSDTHGYEPVATSTGAQDD). The Fe2OG dioxygenase domain occupies 169-273 (ESLSTLSMFR…RFSIAYFLRA (105 aa)). Fe cation is bound by residues His-194, Asp-196, and His-251. Residue Arg-264 participates in 2-oxoglutarate binding.

Belongs to the iron/ascorbate-dependent oxidoreductase family.

It functions in the pathway antifungal biosynthesis. Functionally, 2-oxoglutarate-dependent dioxygenase; part of the gene cluster that mediates the biosynthesis of the antifungal antibiotic FR901469, an inhibitor of beta-1,3-glucansynthase, exerting antifungal activity against the pathogenes Candida albicans and Aspergillus fumigatus. FR901469 is a cyclic depsipeptide containing 12 amino acid residues and a fatty acid chain. The NRPS frbI contains 12 modules responsible for the formation of the depsipeptide backbone which is denoted as Acyl-Thr-Ala-Tyr-Val-4OHPro-Thr-Thr-3OHPro-threo3OHGln-Gly-Thr-Orn-OH (C71H116N14O23). The PKS frbB is probably involved in the production of the hydrocarbon chain, and the acyl-CoA ligase frbC might be involved in the transport of the chain to the peptide ptoduct of frbI. Because FR901469 contains 3 hydroxylated amino acid residues, the 3 oxygenases frbA, frbH, and frbJ might be participating in amino acid hydroxylation. As no thioesterase domains were detected in frbI or frbB, the thioesterases frbD and frbE may instead release and cyclize the products of the NRPS and PKS, respectively. The protein is 2-oxoglutarate-dependent dioxygenase frbH of Dothideomycetidae sp. (strain 11243) (Fungal sp. (strain No.11243)).